Reading from the N-terminus, the 575-residue chain is Urease subunit alpha (575 aa).

A Urease domain is found at 138–575; it reads GAVDCHVHLI…LPMTQRYFLF (438 aa). Ni(2+) is bound by residues His143, His145, and Lys226. Lys226 is subject to N6-carboxylysine. Residue His228 participates in substrate binding. His255 and His281 together coordinate Ni(2+). His329 acts as the Proton donor in catalysis. Asp369 lines the Ni(2+) pocket.

Belongs to the metallo-dependent hydrolases superfamily. Urease alpha subunit family. As to quaternary structure, heterotrimer of UreA (gamma), UreB (beta) and UreC (alpha) subunits. Three heterotrimers associate to form the active enzyme. Ni cation serves as cofactor. In terms of processing, carboxylation allows a single lysine to coordinate two nickel ions.

The protein localises to the cytoplasm. It catalyses the reaction urea + 2 H2O + H(+) = hydrogencarbonate + 2 NH4(+). Its pathway is nitrogen metabolism; urea degradation; CO(2) and NH(3) from urea (urease route): step 1/1. The chain is Urease subunit alpha from Frankia casuarinae (strain DSM 45818 / CECT 9043 / HFP020203 / CcI3).